The sequence spans 161 residues: Multiprotein-bridging factor 1 (161 aa).

A disordered region spans residues 1–66; sequence MADDWDTVTK…RSEAGSGQFL (66 aa). A compositionally biased stretch (gly residues) spans 14 to 23; sequence RVGGGGGGGP. Polar residues-rich tracts occupy residues 27–36 and 52–65; these read TIKNKSQLNA and TANS…SGQF. The HTH cro/C1-type domain occupies 90–144; it reads MQNREQKKLGNRLEFGKKVGINEKDLARIEKGEVPITQDQVNRIERGLEMFIRGV. Positions 101–120 form a DNA-binding region, H-T-H motif; the sequence is RLEFGKKVGINEKDLARIEK.

It belongs to the MBF1 family.

Transcriptional coactivator that stimulates GCN4-dependent transcriptional activity by bridging the DNA-binding region of GCN4 and TBP (SPT15), thereby recruiting TBP to GCN4-bound promoters. Involved in induction of the ribosome quality control (RQC) pathway; a pathway that degrades nascent peptide chains during problematic translation. Required to prevent stalled ribosomes from frameshifting. This chain is Multiprotein-bridging factor 1 (MBF1), found in Pyricularia oryzae (strain 70-15 / ATCC MYA-4617 / FGSC 8958) (Rice blast fungus).